Consider the following 89-residue polypeptide: Large ribosomal subunit protein bL28 (89 aa).

Belongs to the bacterial ribosomal protein bL28 family.

This Chlamydia pneumoniae (Chlamydophila pneumoniae) protein is Large ribosomal subunit protein bL28.